The sequence spans 437 residues: Adenylosuccinate synthetase (437 aa).

GTP contacts are provided by residues 25-31 (GDEGKGK), 53-55 (GHT), and lysine 62. The Proton acceptor role is filled by aspartate 26. Mg(2+)-binding residues include aspartate 26 and glycine 53. Residues 26-29 (DEGK) and 51-54 (NAGH) contribute to the IMP site. The active-site Proton donor is the histidine 54. Residues threonine 141, arginine 155, asparagine 232, and threonine 247 each contribute to the IMP site. Threonine 307 provides a ligand contact to GTP. Residue 307 to 313 (TTTKRPR) participates in substrate binding. Arginine 311 is a binding site for IMP. GTP contacts are provided by residues arginine 313, 339–341 (KLD), and 425–427 (GIG).

This sequence belongs to the adenylosuccinate synthetase family. Homodimer. It depends on Mg(2+) as a cofactor.

It localises to the cytoplasm. It carries out the reaction IMP + L-aspartate + GTP = N(6)-(1,2-dicarboxyethyl)-AMP + GDP + phosphate + 2 H(+). Its pathway is purine metabolism; AMP biosynthesis via de novo pathway; AMP from IMP: step 1/2. In terms of biological role, plays an important role in the salvage pathway for purine nucleotide biosynthesis. Catalyzes the first committed step in the biosynthesis of AMP from IMP. The sequence is that of Adenylosuccinate synthetase from Plasmodium vivax (strain Salvador I).